The primary structure comprises 238 residues: DNA repair protein RecO (238 aa).

This sequence belongs to the RecO family.

Functionally, involved in DNA repair and RecF pathway recombination. This chain is DNA repair protein RecO, found in Anaplasma marginale (strain St. Maries).